A 228-amino-acid polypeptide reads, in one-letter code: ATP-dependent dethiobiotin synthetase BioD (228 aa).

ATP is bound at residue 14-19 (DAGKTL). Residue threonine 18 coordinates Mg(2+). The active site involves lysine 39. ATP-binding positions include aspartate 56, 117 to 120 (EGAG), and 206 to 208 (PRL). Residues aspartate 56 and glutamate 117 each contribute to the Mg(2+) site.

Belongs to the dethiobiotin synthetase family. As to quaternary structure, homodimer. Mg(2+) serves as cofactor.

It is found in the cytoplasm. It catalyses the reaction (7R,8S)-7,8-diammoniononanoate + CO2 + ATP = (4R,5S)-dethiobiotin + ADP + phosphate + 3 H(+). Its pathway is cofactor biosynthesis; biotin biosynthesis; biotin from 7,8-diaminononanoate: step 1/2. Its function is as follows. Catalyzes a mechanistically unusual reaction, the ATP-dependent insertion of CO2 between the N7 and N8 nitrogen atoms of 7,8-diaminopelargonic acid (DAPA, also called 7,8-diammoniononanoate) to form a ureido ring. This is ATP-dependent dethiobiotin synthetase BioD from Cellvibrio japonicus (strain Ueda107) (Pseudomonas fluorescens subsp. cellulosa).